The primary structure comprises 361 residues: Phosphoserine aminotransferase (361 aa).

Position 43 (arginine 43) interacts with L-glutamate. Pyridoxal 5'-phosphate is bound by residues 77-78 (AS), tryptophan 103, threonine 153, aspartate 173, and glutamine 196. Lysine 197 bears the N6-(pyridoxal phosphate)lysine mark. Residue 238–239 (NT) coordinates pyridoxal 5'-phosphate.

This sequence belongs to the class-V pyridoxal-phosphate-dependent aminotransferase family. SerC subfamily. Homodimer. The cofactor is pyridoxal 5'-phosphate.

Its subcellular location is the cytoplasm. The catalysed reaction is O-phospho-L-serine + 2-oxoglutarate = 3-phosphooxypyruvate + L-glutamate. It carries out the reaction 4-(phosphooxy)-L-threonine + 2-oxoglutarate = (R)-3-hydroxy-2-oxo-4-phosphooxybutanoate + L-glutamate. It participates in amino-acid biosynthesis; L-serine biosynthesis; L-serine from 3-phospho-D-glycerate: step 2/3. Its pathway is cofactor biosynthesis; pyridoxine 5'-phosphate biosynthesis; pyridoxine 5'-phosphate from D-erythrose 4-phosphate: step 3/5. Catalyzes the reversible conversion of 3-phosphohydroxypyruvate to phosphoserine and of 3-hydroxy-2-oxo-4-phosphonooxybutanoate to phosphohydroxythreonine. The polypeptide is Phosphoserine aminotransferase (Pseudomonas paraeruginosa (strain DSM 24068 / PA7) (Pseudomonas aeruginosa (strain PA7))).